The following is a 135-amino-acid chain: Glutaredoxin-C3 (135 aa).

Positions 26–134 (VARVERLASE…PLLKEAGALW (109 aa)) constitute a Glutaredoxin domain. The cysteines at positions 46 and 49 are disulfide-linked. The Responsive for interaction with TGA factors signature appears at 132-135 (ALWL).

Belongs to the glutaredoxin family. CC-type subfamily.

The protein localises to the cytoplasm. Its subcellular location is the nucleus. Functionally, has a glutathione-disulfide oxidoreductase activity in the presence of NADPH and glutathione reductase. Reduces low molecular weight disulfides and proteins. This Oryza sativa subsp. japonica (Rice) protein is Glutaredoxin-C3 (GRXC3).